Reading from the N-terminus, the 585-residue chain is MGIDSAHLIAQTILQGFDAQYGRFLEVTSGAQQRFEQADWHAVQQAMKKRINLYDHHVGLVVEQLKCIHSAFGYDEEYIAKVKVVYTGLLPDYPRFEIAESFFNSVYCRLFEHRNLTPDKLFIFTSQPARRFRDIPRPLSRDFFPNDNLALMLRTILNDLPLRLPWENLERDIYYITDYLQQTFPVGELLQATFQIANELFYRNKAAWLVGKIRIGGQVYPFLLPIHHNESGGIFIDTCLTDYADASIVFGFARSYFMVYAPLPAALVEWLREILPAKSTSELYMAIGCQKHGKTEYYREYLAFITFSKEQLIIAPGVKGMVMLVFTSPSFDRVFKVIKDQFAPQKEVTQERVQECYRLVKEHDRVGRMADTQEFENFVIDKARISPELMEELQKEVPEKLEDLGDKILIKHLYMERRMTPLNIYMEQVEERKLKDVIEEYGNAIKQLAAANIFPGDMLFKNFGVTRHGRVVFYDYDEICYMTEVNFRDIPPPRYPEDELAGEPWYSVAPNDVFPEEFRHFLCTDSRIRRYFEEMHSDLFKADYWRALQERIRSGHVEDVFAYRRKQRFSQRTEIETYSIAKVSA.

Residues Ala315–Met321 and Lys336 contribute to the ATP site. Asp371 is an active-site residue.

It belongs to the AceK family.

It is found in the cytoplasm. The enzyme catalyses L-seryl-[isocitrate dehydrogenase] + ATP = O-phospho-L-seryl-[isocitrate dehydrogenase] + ADP + H(+). Functionally, bifunctional enzyme which can phosphorylate or dephosphorylate isocitrate dehydrogenase (IDH) on a specific serine residue. This is a regulatory mechanism which enables bacteria to bypass the Krebs cycle via the glyoxylate shunt in response to the source of carbon. When bacteria are grown on glucose, IDH is fully active and unphosphorylated, but when grown on acetate or ethanol, the activity of IDH declines drastically concomitant with its phosphorylation. In Photorhabdus laumondii subsp. laumondii (strain DSM 15139 / CIP 105565 / TT01) (Photorhabdus luminescens subsp. laumondii), this protein is Isocitrate dehydrogenase kinase/phosphatase.